Reading from the N-terminus, the 401-residue chain is Protein IQ-DOMAIN 24 (401 aa).

The segment at 1–48 (MGFFGRLFGSKKQEKATPNRRRWSFATRSSHPENDSSSHSSKRRGDED) is disordered. The interval 105 to 121 (EYKAAMKIQSAFRGYLA) is calmodulin-binding. IQ domains are found at residues 105 to 133 (EYKA…ALVK) and 134 to 156 (LQAL…RMQT). 2 stretches are compositionally biased toward low complexity: residues 165 to 176 (RASRSSHVSDSS) and 278 to 287 (RSRTGSSSGG). Disordered regions lie at residues 165-186 (RASR…IPSS) and 258-296 (SPRK…PFTP).

The protein belongs to the IQD family. As to quaternary structure, binds to multiple calmodulin (CaM) in the presence of Ca(2+) and CaM-like proteins.

The protein localises to the nucleus. It is found in the nuclear body. It localises to the cell membrane. Functionally, may be involved in cooperative interactions with calmodulins or calmodulin-like proteins. Recruits calmodulin proteins to microtubules, thus being a potential scaffold in cellular signaling and trafficking. May associate with nucleic acids and regulate gene expression at the transcriptional or post-transcriptional level. This chain is Protein IQ-DOMAIN 24, found in Arabidopsis thaliana (Mouse-ear cress).